We begin with the raw amino-acid sequence, 652 residues long: DNA ligase (652 aa).

Residues 29 to 33 (DSDYD), 78 to 79 (SL), and E107 contribute to the NAD(+) site. K109 (N6-AMP-lysine intermediate) is an active-site residue. R130, E164, K278, and K302 together coordinate NAD(+). The Zn(2+) site is built by C395, C398, C413, and C418. Positions 577 to 652 (NSDAALFGLT…IEDEDWLRQL (76 aa)) constitute a BRCT domain.

Belongs to the NAD-dependent DNA ligase family. LigA subfamily. The cofactor is Mg(2+). Requires Mn(2+) as cofactor.

The catalysed reaction is NAD(+) + (deoxyribonucleotide)n-3'-hydroxyl + 5'-phospho-(deoxyribonucleotide)m = (deoxyribonucleotide)n+m + AMP + beta-nicotinamide D-nucleotide.. In terms of biological role, DNA ligase that catalyzes the formation of phosphodiester linkages between 5'-phosphoryl and 3'-hydroxyl groups in double-stranded DNA using NAD as a coenzyme and as the energy source for the reaction. It is essential for DNA replication and repair of damaged DNA. The chain is DNA ligase from Streptococcus pyogenes serotype M4 (strain MGAS10750).